Here is a 268-residue protein sequence, read N- to C-terminus: MAVNVYSTSVTSDNLSRHDMLAWINESLQLNLTKIEQLCSGAAYCQFMDMLFPGSIALKKVKFQAKLEHEYIQNFKILQAGFKRMGVDKIIPVDKLVKGKFQDNFEFVQWFKKFFDANYDGKDYDPVAARQGQETAVAPSLVAPALNKPKKPLTSSSAAPQRPISTQRTAAAPKAGPGVVRKNPGVGNGDDEAAELMQQVNVLKLTVEDLEKERDFYFGKLRNIELICQENEGENDPVLQRIVDILYATDEGFVIPDEGGPQEEQEEY.

An N-acetylalanine modification is found at Ala-2. Residues 14–116 (NLSRHDMLAW…FVQWFKKFFD (103 aa)) enclose the Calponin-homology (CH) domain. At Lys-66 the chain carries N6-crotonyllysine. Position 124 is a phosphotyrosine (Tyr-124). Residues 124–268 (YDPVAARQGQ…GGPQEEQEEY (145 aa)) are interaction with MTUS2/TIP150. Residues 146-187 (LNKPKKPLTSSSAAPQRPISTQRTAAAPKAGPGVVRKNPGVG) form a disordered region. Residues 153–169 (LTSSSAAPQRPISTQRT) are compositionally biased toward polar residues. Phosphoserine is present on residues Ser-155 and Ser-165. An EB1 C-terminal domain is found at 185-255 (GVGNGDDEAA…LYATDEGFVI (71 aa)). The segment at 185-268 (GVGNGDDEAA…GGPQEEQEEY (84 aa)) is interaction with CDK5RAP2. The tract at residues 206–211 (TVEDLE) is interaction with APC. The interval 208-268 (EDLEKERDFY…GGPQEEQEEY (61 aa)) is DCTN1-binding. Lys-220 is modified (N6-acetyllysine). Residues 220 to 242 (KLRNIELICQENEGENDPVLQRI) form an APC-binding region. The interval 232–255 (EGENDPVLQRIVDILYATDEGFVI) is interaction with SKA1.

This sequence belongs to the MAPRE family. In terms of assembly, homodimer. Heterodimer with MAPRE3. Interacts with DCTN1, DCTN2, TERF1 and dynein intermediate chain. Interaction with DIAPH1 and DIAPH2. Interacts (via C-terminal residues 206-211) with APC (via C-terminal residues 2674-2843); the interaction inhibits association with and bundling of F-actin. Interacts with CLASP2, DST, KIF2C and STIM1; probably required for their targeting to the growing microtubule plus ends. Interacts with MTUS2; interaction is direct and probably targets MTUS2 to microtubules. Interacts (via C-terminus) with SKA1 (via SXIP motif); the interaction is direct and stabilizes the kinetochore-microtubule attachment of the SKA1 complex. Interacts with APC2. Interacts with CLASP1. Interacts with CDK5RAP2. Interacts with MACF1. Interacts with RABL2/RABL2A; binds preferentially to GTP-bound RABL2. Interacts with KCNAB2. Interacts (via C-terminus) with CLIP1. Interacts with SLAIN2 and SLAIN1. Interacts with KIF18B; this interaction is required for efficient accumulation of KIF18B at microtubule plus ends. Interacts with MISP. Interacts with KNSTRN. Interacts with NCKAP5L. Interacts with CAMSAP2. Interacts with PDE4DIP isoform 13/MMG8/SMYLE; this interaction is required for its recruitment to the Golgi apparatus. Forms a pericentrosomal complex with AKAP9, CDK5RAP2 and PDE4DIP isoform 13/MMG8/SMYLE; within this complex, MAPRE1 binding to CDK5RAP2 may be mediated by PDE4DIP. Interacts with AKNA. Interacts with GAS2L1, GAS2L2, and GAS2L3. Interacts with RARRES1 and AGBL2. Post-translationally, acetylation at Lys-220 by KAT2B/PCAF promotes dynamic kinetochore-microtubule interactions in early mitosis. Crotonylated by KAT5 during mitosis, promoting astral microtubule plasticity and dynamic connection between astral microtubules and the cortex during mitotic chromosome segregation, thereby ensuring accurate spindle positioning in mitosis. Decrotonylated by HDAC3. Ubiquitously expressed.

It localises to the cytoplasm. The protein resides in the cytoskeleton. The protein localises to the microtubule organizing center. It is found in the centrosome. Its subcellular location is the golgi apparatus. It localises to the spindle. The protein resides in the spindle pole. In terms of biological role, plus-end tracking protein (+TIP) that binds to the plus-end of microtubules and regulates the dynamics of the microtubule cytoskeleton. Recruits other +TIP proteins to microtubules by binding to a conserved Ser-X-Leu-Pro (SXLP) motif in their polypeptide chains. Promotes cytoplasmic microtubule nucleation and elongation. Involved in mitotic spindle positioning by stabilizing microtubules and promoting dynamic connection between astral microtubules and the cortex during mitotic chromosome segregation. Assists chromosome alignment in metaphase by recruiting the SKA complex to the spindle and stabilizing its interactions with microtubule bundles (K-fibers). Also acts as a regulator of minus-end microtubule organization: interacts with the complex formed by AKAP9 and PDE4DIP, leading to recruit CAMSAP2 to the Golgi apparatus, thereby tethering non-centrosomal minus-end microtubules to the Golgi, an important step for polarized cell movement. Promotes elongation of CAMSAP2-decorated microtubule stretches on the minus-end of microtubules. Acts as a regulator of autophagosome transport via interaction with CAMSAP2. Functions downstream of Rho GTPases and DIAPH1 in stable microtubule formation. May play a role in cell migration. This chain is Microtubule-associated protein RP/EB family member 1, found in Homo sapiens (Human).